The chain runs to 375 residues: Alcohol dehydrogenase 1 (375 aa).

N-acetylserine is present on S2. Residues C47, H68, C98, C101, C104, C112, and C175 each contribute to the Zn(2+) site. NAD(+) contacts are provided by residues W200–G205, D224, and K229. Position 234 is an N6-succinyllysine (K234). Position 293–295 (V293–V295) interacts with NAD(+). Position 340 is an N6-succinyllysine (K340). R370 contributes to the NAD(+) binding site.

It belongs to the zinc-containing alcohol dehydrogenase family. Class-I subfamily. Homodimer. Zn(2+) is required as a cofactor.

It localises to the cytoplasm. The catalysed reaction is a primary alcohol + NAD(+) = an aldehyde + NADH + H(+). It catalyses the reaction a secondary alcohol + NAD(+) = a ketone + NADH + H(+). This is Alcohol dehydrogenase 1 (ADH1) from Geomys knoxjonesi (Jones' pocket gopher).